The chain runs to 262 residues: Conserved oligomeric Golgi complex subunit 2 (262 aa).

As to quaternary structure, component of the conserved oligomeric Golgi (COG or Sec34/Sec35) complex which consists of eight different proteins COG1-COG8. The COG complex interacts with the Rab GTPase YPT1, the Glogi SNAREs GOS1, SEC22, SED5, VTI1 and YKT6 and the COPI coatomer subunit gamma SEC21.

The protein resides in the golgi apparatus membrane. Acts as a component of the peripheral membrane COG complex that is involved in intra-Golgi protein trafficking. COG is located at the cis-Golgi, and regulates tethering of retrograde intra-Golgi vesicles and possibly a number of other membrane trafficking events. COG2 is required for ER to Golgi vesicle docking. Not essential for viability. This chain is Conserved oligomeric Golgi complex subunit 2 (COG2), found in Saccharomyces cerevisiae (strain ATCC 204508 / S288c) (Baker's yeast).